We begin with the raw amino-acid sequence, 479 residues long: Ribulose bisphosphate carboxylase large chain (479 aa).

Residues 1-2 constitute a propeptide that is removed on maturation; the sequence is MS. 2 residues coordinate substrate: Asn-123 and Thr-173. Lys-175 functions as the Proton acceptor in the catalytic mechanism. Lys-177 serves as a coordination point for substrate. Mg(2+) is bound by residues Lys-201, Asp-203, and Glu-204. The residue at position 201 (Lys-201) is an N6-carboxylysine. Ser-208 carries the post-translational modification Phosphoserine. Catalysis depends on His-294, which acts as the Proton acceptor. Residues Arg-295 and His-327 each contribute to the substrate site. The residue at position 330 (Thr-330) is a Phosphothreonine. Ser-379 provides a ligand contact to substrate.

This sequence belongs to the RuBisCO large chain family. Type I subfamily. Heterohexadecamer of 8 large chains and 8 small chains; disulfide-linked. The disulfide link is formed within the large subunit homodimers. The cofactor is Mg(2+). Post-translationally, the disulfide bond which can form in the large chain dimeric partners within the hexadecamer appears to be associated with oxidative stress and protein turnover.

It localises to the plastid. Its subcellular location is the chloroplast. It carries out the reaction 2 (2R)-3-phosphoglycerate + 2 H(+) = D-ribulose 1,5-bisphosphate + CO2 + H2O. The catalysed reaction is D-ribulose 1,5-bisphosphate + O2 = 2-phosphoglycolate + (2R)-3-phosphoglycerate + 2 H(+). In terms of biological role, ruBisCO catalyzes two reactions: the carboxylation of D-ribulose 1,5-bisphosphate, the primary event in carbon dioxide fixation, as well as the oxidative fragmentation of the pentose substrate in the photorespiration process. Both reactions occur simultaneously and in competition at the same active site. The chain is Ribulose bisphosphate carboxylase large chain from Nasturtium officinale (Watercress).